A 73-amino-acid polypeptide reads, in one-letter code: MKPEIHPEYHEITVVMTDGSSFKTRTTWGKPGDTMRLDIDPKSHPAWTGVQKLVDTGGQIAKFNKRFSNFGLK.

This sequence belongs to the bacterial ribosomal protein bL31 family. Type A subfamily. Part of the 50S ribosomal subunit.

In terms of biological role, binds the 23S rRNA. The polypeptide is Large ribosomal subunit protein bL31 (Rhodospirillum centenum (strain ATCC 51521 / SW)).